We begin with the raw amino-acid sequence, 118 residues long: UPF0102 protein RSal33209_1090 (118 aa).

It belongs to the UPF0102 family.

This chain is UPF0102 protein RSal33209_1090, found in Renibacterium salmoninarum (strain ATCC 33209 / DSM 20767 / JCM 11484 / NBRC 15589 / NCIMB 2235).